The sequence spans 76 residues: Acyl carrier protein (76 aa).

Residues 1–75 form the Carrier domain; the sequence is MVFEKIKALI…DIVFYITKNT (75 aa). S35 is subject to O-(pantetheine 4'-phosphoryl)serine.

The protein belongs to the acyl carrier protein (ACP) family. In terms of processing, 4'-phosphopantetheine is transferred from CoA to a specific serine of apo-ACP by AcpS. This modification is essential for activity because fatty acids are bound in thioester linkage to the sulfhydryl of the prosthetic group.

It localises to the cytoplasm. The protein operates within lipid metabolism; fatty acid biosynthesis. Functionally, carrier of the growing fatty acid chain in fatty acid biosynthesis. The sequence is that of Acyl carrier protein from Onion yellows phytoplasma (strain OY-M).